A 986-amino-acid polypeptide reads, in one-letter code: Bone morphogenetic protein 1 (986 aa).

Positions 1-22 (MPGVARLPLLLGLLLLPRPGRP) are cleaved as a signal peptide. The propeptide occupies 23–120 (LDLADYTYDL…RWRGRSRSRR (98 aa)). The disordered stretch occupies residues 83–125 (SIKAAVPGNTSTPSCQSTNGQPQRGACGRWRGRSRSRRAATSR). The span at 90 to 104 (GNTSTPSCQSTNGQP) shows a compositional bias: polar residues. Residue N91 is glycosylated (N-linked (GlcNAc...) asparagine). Residues 112–122 (WRGRSRSRRAA) are compositionally biased toward basic residues. The Peptidase M12A domain occupies 121 to 320 (AATSRPERVW…AQARKLYKCP (200 aa)). N142 carries an N-linked (GlcNAc...) asparagine glycan. 4 disulfides stabilise this stretch: C163–C319, C183–C205, C185–C186, and C322–C348. H213 is a Zn(2+) binding site. Residue E214 is part of the active site. H217 and H223 together coordinate Zn(2+). CUB domains lie at 322–434 (CGET…YEAI) and 435–546 (CGGD…NFFK). N-linked (GlcNAc...) asparagine glycans are attached at residues N332 and N363. Cystine bridges form between C375–C397, C435–C461, C488–C510, C551–C563, C559–C572, C574–C587, C591–C617, C644–C666, C707–C718, C714–C727, C729–C742, C747–C773, C800–C822, C860–C890, and C917–C939. Residues 547–588 (EVDECSRPNRGGCEQRCLNTLGSYKCSCDPGYELAPDKRRCE) enclose the EGF-like 1; calcium-binding domain. One can recognise a CUB 3 domain in the interval 591–703 (CGGFLTKLNG…KGFKAHFFSD (113 aa)). N599 carries an N-linked (GlcNAc...) asparagine glycan. Residues 704–743 (KDECSKDNGGCQQDCVNTFGSYECQCRSGFVLHDNKHDCK) enclose the EGF-like 2; calcium-binding domain. CUB domains are found at residues 747–859 (CDHK…HATE) and 860–976 (CGGQ…YTST). An omega-N-methylarginine mark is found at R934 and R937.

Interacts with POSTN, the interaction promotes deposition on the extracellular matrix. Requires Zn(2+) as cofactor. In terms of processing, proteolytically activated in the trans-Golgi network by furin-like/paired basic proprotein convertases, cleavage is not required for secretion. Ubiquitous.

The protein localises to the golgi apparatus. It localises to the trans-Golgi network. It is found in the secreted. Its subcellular location is the extracellular space. The protein resides in the extracellular matrix. It catalyses the reaction Cleavage of the C-terminal propeptide at Ala-|-Asp in type I and II procollagens and at Arg-|-Asp in type III.. Activity is increased by the procollagen C-endopeptidase enhancer protein. Functionally, metalloprotease that plays key roles in regulating the formation of the extracellular matrix (ECM) via processing of various precursor proteins into mature functional enzymes or structural proteins. Thereby participates in several developmental and physiological processes such as cartilage and bone formation, muscle growth and homeostasis, wound healing and tissue repair. Roles in ECM formation include cleavage of the C-terminal propeptides from procollagens such as procollagen I, II and III or the proteolytic activation of the enzyme lysyl oxidase LOX, necessary to formation of covalent cross-links in collagen and elastic fibers. Additional substrates include matricellular thrombospondin-1/THBS1 whose cleavage leads to cell adhesion disruption and TGF-beta activation. In terms of biological role, plays an important role in bone repair by acting as a coactivator of BMP7. The polypeptide is Bone morphogenetic protein 1 (BMP1) (Homo sapiens (Human)).